A 90-amino-acid chain; its full sequence is Small ribosomal subunit protein uS17 (90 aa).

It belongs to the universal ribosomal protein uS17 family. In terms of assembly, part of the 30S ribosomal subunit.

Its function is as follows. One of the primary rRNA binding proteins, it binds specifically to the 5'-end of 16S ribosomal RNA. In Burkholderia thailandensis (strain ATCC 700388 / DSM 13276 / CCUG 48851 / CIP 106301 / E264), this protein is Small ribosomal subunit protein uS17.